Here is a 239-residue protein sequence, read N- to C-terminus: Ribosomal RNA small subunit methyltransferase G (239 aa).

S-adenosyl-L-methionine contacts are provided by residues Gly-77, Phe-82, 128–129 (AE), and Arg-146. The tract at residues 217–239 (RRQTSKKYPRKPGTPNKSPLVES) is disordered.

It belongs to the methyltransferase superfamily. RNA methyltransferase RsmG family.

The protein localises to the cytoplasm. Specifically methylates the N7 position of guanine in position 535 of 16S rRNA. The chain is Ribosomal RNA small subunit methyltransferase G from Staphylococcus epidermidis (strain ATCC 12228 / FDA PCI 1200).